A 621-amino-acid polypeptide reads, in one-letter code: DEAD-box ATP-dependent RNA helicase 39 (621 aa).

Residues 112–140 (ENFQELGLSEEVMGALQELNIEVPTEIQC) carry the Q motif motif. The Helicase ATP-binding domain maps to 143–330 (IPAVMERKSV…DEEFQGIEHL (188 aa)). 156–163 (SHTGSGKT) is a binding site for ATP. Residues 270–273 (DEAD) carry the DEAD box motif. Residues 355 to 505 (KLEALLQVLE…LESLTTDNVR (151 aa)) enclose the Helicase C-terminal domain. A disordered region spans residues 497–621 (ESLTTDNVRR…RGKSSSARAS (125 aa)). Residues 503–537 (NVRRDAARTHITQEKGRSVKQIREVSKQRNSRDKP) are compositionally biased toward basic and acidic residues. Positions 555-572 (KSSSSSFSKPRKASSPPE) are enriched in low complexity.

Belongs to the DEAD box helicase family.

The enzyme catalyses ATP + H2O = ADP + phosphate + H(+). This is DEAD-box ATP-dependent RNA helicase 39 (RH39) from Arabidopsis thaliana (Mouse-ear cress).